The sequence spans 177 residues: Large ribosomal subunit protein uL6 (177 aa).

Over residues 156 to 171 the composition is skewed to basic and acidic residues; the sequence is PYKGKGVRYDTETIRR. The disordered stretch occupies residues 156 to 177; the sequence is PYKGKGVRYDTETIRRKEGKKK.

Belongs to the universal ribosomal protein uL6 family. Part of the 50S ribosomal subunit.

This protein binds to the 23S rRNA, and is important in its secondary structure. It is located near the subunit interface in the base of the L7/L12 stalk, and near the tRNA binding site of the peptidyltransferase center. The chain is Large ribosomal subunit protein uL6 from Gluconacetobacter diazotrophicus (strain ATCC 49037 / DSM 5601 / CCUG 37298 / CIP 103539 / LMG 7603 / PAl5).